Here is a 360-residue protein sequence, read N- to C-terminus: Phosphate acyltransferase (360 aa).

The segment covering 296-305 has biased composition (basic and acidic residues); the sequence is STLRREHLDR. The interval 296–360 is disordered; sequence STLRREHLDR…LRTAEPPGSL (65 aa). Over residues 314–333 the composition is skewed to basic residues; sequence PRQRRRPRRQKRRAACRPRP. Over residues 334-350 the composition is skewed to low complexity; that stretch reads RSAAGRAPGSGVRGAAG.

Belongs to the PlsX family. Homodimer. Probably interacts with PlsY.

It is found in the cytoplasm. The catalysed reaction is a fatty acyl-[ACP] + phosphate = an acyl phosphate + holo-[ACP]. It participates in lipid metabolism; phospholipid metabolism. Its function is as follows. Catalyzes the reversible formation of acyl-phosphate (acyl-PO(4)) from acyl-[acyl-carrier-protein] (acyl-ACP). This enzyme utilizes acyl-ACP as fatty acyl donor, but not acyl-CoA. This chain is Phosphate acyltransferase, found in Deinococcus radiodurans (strain ATCC 13939 / DSM 20539 / JCM 16871 / CCUG 27074 / LMG 4051 / NBRC 15346 / NCIMB 9279 / VKM B-1422 / R1).